We begin with the raw amino-acid sequence, 88 residues long: Small ribosomal subunit protein uS15c (88 aa).

This sequence belongs to the universal ribosomal protein uS15 family. In terms of assembly, part of the 30S ribosomal subunit.

It is found in the plastid. It localises to the chloroplast. The sequence is that of Small ribosomal subunit protein uS15c (rps15) from Barbarea verna (Land cress).